The primary structure comprises 340 residues: HTH-type transcriptional regulator CelR (340 aa).

The region spanning 1–61 is the HTH lacI-type domain; the sequence is MERRRRPTLE…PNRAARTLVT (61 aa). The H-T-H motif DNA-binding region spans 9-28; the sequence is LEMVAALAGVGRGTVSRVIN.

It localises to the cytoplasm. With respect to regulation, activity is controlled by cytoplasmic cellobiose levels. Binding of CelR to the celE promoter is inhibited specifically by low concentrations of cellobiose, the major end product of cellulases. Activity may also be regulated through post-translational modification. Functionally, transcriptional regulator that regulates the expression of all six cellulases, encoded by the cel genes (designated celA through celF). Acts as a repressor. Specifically binds to a 14-bp inverted repeat site, which is present in the upstream region of the cellulase genes. The polypeptide is HTH-type transcriptional regulator CelR (Thermobifida fusca (Thermomonospora fusca)).